A 746-amino-acid polypeptide reads, in one-letter code: Mediator of RNA polymerase II transcription subunit 25 (746 aa).

Residues 1-226 are interaction with the Mediator complex; sequence MVPGSEGPAR…PRHMVLVRGL (226 aa). 2 disordered regions span residues 233-273 and 298-390; these read GSAP…QQYQ and GLGP…PALG. Pro residues predominate over residues 238–251; the sequence is PLQPKQPVPLPPAA. Low complexity predominate over residues 252–262; sequence PAGATLSTAPQ. A compositionally biased stretch (pro residues) spans 329–342; the sequence is PPGPPGAPKPPPAS. A compositionally biased stretch (low complexity) spans 343–354; the sequence is QPSLVSTVAPGP. Residues 389-543 are interaction with VP16; the sequence is LGGQQSVSNK…VNGIRQVITN (155 aa). Residues 395 to 545 form an interaction with CREBBP region; the sequence is VSNKLLAWSG…GIRQVITNHK (151 aa). The interval 548–746 is disordered; it reads QQQKLEQQRG…MEDDILMDLI (199 aa). 2 interaction with RARA regions span residues 563–652 and 639–706; these read APPG…LLNP and PGAN…WPAQ. Residues 599 to 610 show a composition bias toward low complexity; the sequence is AAAGQPQPQGAA. Residues 611-633 are compositionally biased toward pro residues; the sequence is PAPPGAPQGPPGAAPGPPPPGPL. The short motif at 645 to 649 is the LXXLL motif element; sequence LRSLL. 3 stretches are compositionally biased toward pro residues: residues 651-663, 672-682, and 690-701; these read NPPP…PPPQ, PGAPALLPPPH, and LGPPLLHPPPAQ. An Asymmetric dimethylarginine modification is found at R724. The segment covering 737–746 has biased composition (acidic residues); that stretch reads MEDDILMDLI.

Belongs to the Mediator complex subunit 25 family. As to quaternary structure, component of the Mediator complex, which is composed of MED1, MED4, MED6, MED7, MED8, MED9, MED10, MED11, MED12, MED13, MED13L, MED14, MED15, MED16, MED17, MED18, MED19, MED20, MED21, MED22, MED23, MED24, MED25, MED26, MED27, MED29, MED30, MED31, CCNC, CDK8 and CDC2L6/CDK11. The MED12, MED13, CCNC and CDK8 subunits form a distinct module termed the CDK8 module. Mediator containing the CDK8 module is less active than Mediator lacking this module in supporting transcriptional activation. Individual preparations of the Mediator complex lacking one or more distinct subunits have been variously termed ARC, CRSP, DRIP, PC2, SMCC and TRAP. Interacts with CREBBP. Interacts with ESR1, GR, RARA, RXRA and THRB in a ligand-dependent fashion. Binds the Herpes simplex virus activator VP16.

It localises to the nucleus. Its function is as follows. Component of the Mediator complex, a coactivator involved in the regulated transcription of nearly all RNA polymerase II-dependent genes. Mediator functions as a bridge to convey information from gene-specific regulatory proteins to the basal RNA polymerase II transcription machinery. Mediator is recruited to promoters by direct interactions with regulatory proteins and serves as a scaffold for the assembly of a functional preinitiation complex with RNA polymerase II and the general transcription factors. Required for RARA/RXRA-mediated transcription. The protein is Mediator of RNA polymerase II transcription subunit 25 (MED25) of Bos taurus (Bovine).